The sequence spans 105 residues: Pyrimidine/purine nucleoside phosphorylase (105 aa).

The protein belongs to the nucleoside phosphorylase PpnP family.

It carries out the reaction a purine D-ribonucleoside + phosphate = a purine nucleobase + alpha-D-ribose 1-phosphate. It catalyses the reaction adenosine + phosphate = alpha-D-ribose 1-phosphate + adenine. The enzyme catalyses cytidine + phosphate = cytosine + alpha-D-ribose 1-phosphate. The catalysed reaction is guanosine + phosphate = alpha-D-ribose 1-phosphate + guanine. It carries out the reaction inosine + phosphate = alpha-D-ribose 1-phosphate + hypoxanthine. It catalyses the reaction thymidine + phosphate = 2-deoxy-alpha-D-ribose 1-phosphate + thymine. The enzyme catalyses uridine + phosphate = alpha-D-ribose 1-phosphate + uracil. The catalysed reaction is xanthosine + phosphate = alpha-D-ribose 1-phosphate + xanthine. Its function is as follows. Catalyzes the phosphorolysis of diverse nucleosides, yielding D-ribose 1-phosphate and the respective free bases. Can use uridine, adenosine, guanosine, cytidine, thymidine, inosine and xanthosine as substrates. Also catalyzes the reverse reactions. In Albidiferax ferrireducens (strain ATCC BAA-621 / DSM 15236 / T118) (Rhodoferax ferrireducens), this protein is Pyrimidine/purine nucleoside phosphorylase.